The chain runs to 276 residues: Shikimate dehydrogenase (NADP(+)) (276 aa).

Shikimate is bound by residues 14–16 (SKS) and Thr-61. Lys-65 functions as the Proton acceptor in the catalytic mechanism. Residue Asp-77 coordinates NADP(+). Residues Asn-86 and Asp-102 each contribute to the shikimate site. Residues 127–131 (GAGGA), 151–156 (NRTPDK), and Met-214 each bind NADP(+). Tyr-216 provides a ligand contact to shikimate. Residue Gly-238 participates in NADP(+) binding.

This sequence belongs to the shikimate dehydrogenase family. Homodimer.

The catalysed reaction is shikimate + NADP(+) = 3-dehydroshikimate + NADPH + H(+). Its pathway is metabolic intermediate biosynthesis; chorismate biosynthesis; chorismate from D-erythrose 4-phosphate and phosphoenolpyruvate: step 4/7. Its function is as follows. Involved in the biosynthesis of the chorismate, which leads to the biosynthesis of aromatic amino acids. Catalyzes the reversible NADPH linked reduction of 3-dehydroshikimate (DHSA) to yield shikimate (SA). This chain is Shikimate dehydrogenase (NADP(+)), found in Nitrosomonas europaea (strain ATCC 19718 / CIP 103999 / KCTC 2705 / NBRC 14298).